The sequence spans 441 residues: Signal recognition particle 54 kDa protein (441 aa).

GTP contacts are provided by residues 104–111, 186–190, and 244–247; these read GLQGSGKT, DTAGR, and TKLD.

This sequence belongs to the GTP-binding SRP family. SRP54 subfamily. Part of the signal recognition particle protein translocation system, which is composed of SRP and FtsY. Archaeal SRP consists of a 7S RNA molecule of 300 nucleotides and two protein subunits: SRP54 and SRP19.

The protein localises to the cytoplasm. It catalyses the reaction GTP + H2O = GDP + phosphate + H(+). Its function is as follows. Involved in targeting and insertion of nascent membrane proteins into the cytoplasmic membrane. Binds to the hydrophobic signal sequence of the ribosome-nascent chain (RNC) as it emerges from the ribosomes. The SRP-RNC complex is then targeted to the cytoplasmic membrane where it interacts with the SRP receptor FtsY. The polypeptide is Signal recognition particle 54 kDa protein (Staphylothermus marinus (strain ATCC 43588 / DSM 3639 / JCM 9404 / F1)).